Consider the following 230-residue polypeptide: Ion-translocating oxidoreductase complex subunit E (230 aa).

The next 5 membrane-spanning stretches (helical) occupy residues 39 to 59 (LGLGIATLLVLVGSNVTVSLV), 69 to 89 (IPVFVMIIASLVTCVQLLMNA), 93 to 113 (GLYLSLGIFIPLIVTNCIIIG), 124 to 144 (VLPAALDGFWMGLGMTSVLVV), and 182 to 202 (AFLLALLPPGAFIGVGFLIAA).

Belongs to the NqrDE/RnfAE family. As to quaternary structure, the complex is composed of six subunits: RnfA, RnfB, RnfC, RnfD, RnfE and RnfG.

It localises to the cell inner membrane. Its function is as follows. Part of a membrane-bound complex that couples electron transfer with translocation of ions across the membrane. This chain is Ion-translocating oxidoreductase complex subunit E, found in Vibrio cholerae serotype O1 (strain ATCC 39315 / El Tor Inaba N16961).